A 400-amino-acid chain; its full sequence is Formate-dependent phosphoribosylglycinamide formyltransferase (400 aa).

Residues Glu-21–Leu-22 and Glu-81 contribute to the N(1)-(5-phospho-beta-D-ribosyl)glycinamide site. ATP-binding positions include Arg-114, Lys-155, Ser-160 to Gln-165, Glu-195 to Ile-198, and Glu-203. One can recognise an ATP-grasp domain in the interval Arg-119–Leu-313. Glu-272 and Glu-284 together coordinate Mg(2+). Residues Asp-291, Lys-360, and Arg-367–Arg-368 each bind N(1)-(5-phospho-beta-D-ribosyl)glycinamide.

It belongs to the PurK/PurT family. In terms of assembly, homodimer.

The catalysed reaction is N(1)-(5-phospho-beta-D-ribosyl)glycinamide + formate + ATP = N(2)-formyl-N(1)-(5-phospho-beta-D-ribosyl)glycinamide + ADP + phosphate + H(+). The protein operates within purine metabolism; IMP biosynthesis via de novo pathway; N(2)-formyl-N(1)-(5-phospho-D-ribosyl)glycinamide from N(1)-(5-phospho-D-ribosyl)glycinamide (formate route): step 1/1. Its function is as follows. Involved in the de novo purine biosynthesis. Catalyzes the transfer of formate to 5-phospho-ribosyl-glycinamide (GAR), producing 5-phospho-ribosyl-N-formylglycinamide (FGAR). Formate is provided by PurU via hydrolysis of 10-formyl-tetrahydrofolate. The sequence is that of Formate-dependent phosphoribosylglycinamide formyltransferase from Methylococcus capsulatus (strain ATCC 33009 / NCIMB 11132 / Bath).